The following is a 416-amino-acid chain: Formyl-CoA:oxalate CoA-transferase (416 aa).

CoA-binding positions include 17–18 (QS), Arg38, 72–75 (LNTK), 96–98 (NFH), His104, and 137–140 (KAYE). Catalysis depends on Asp169, which acts as the Nucleophile. 248–250 (GGQ) contacts substrate. 273–275 (QEQ) is a binding site for CoA.

The protein belongs to the CoA-transferase III family. Frc subfamily. Homodimer.

It catalyses the reaction formyl-CoA + oxalate = oxalyl-CoA + formate. It participates in metabolic intermediate degradation; oxalate degradation; CO(2) and formate from oxalate: step 1/2. Functionally, involved in the catabolism of oxalate and in the adapatation to low pH via the induction of the oxalate-dependent acid tolerance response (ATR). Catalyzes the transfer of the CoA moiety from formyl-CoA to oxalate. This chain is Formyl-CoA:oxalate CoA-transferase, found in Escherichia coli O6:H1 (strain CFT073 / ATCC 700928 / UPEC).